We begin with the raw amino-acid sequence, 526 residues long: Vang-like protein 2 (526 aa).

The disordered stretch occupies residues 1-95 (MDNESQYSGY…NEDLTRASKE (95 aa)). Topologically, residues 1–109 (MDNESQYSGY…SPLECRRFAG (109 aa)) are cytoplasmic. The span at 15–33 (SHSRSSRKHRDRRDRHRSK) shows a compositional bias: basic residues. Basic and acidic residues-rich tracts occupy residues 34 to 43 (SRDSSSRGDK) and 58 to 68 (ESTRGDDRDDN). Residues 70–83 (GETTTVVTGTSEHS) are compositionally biased toward low complexity. The segment covering 84-95 (VSNEDLTRASKE) has biased composition (basic and acidic residues). Residues 110–130 (PIVSGVLGLFALLTPLAFLLL) traverse the membrane as a helical segment. Residues 131 to 148 (PQLLWRDSLEPCGTPCEG) lie on the Extracellular side of the membrane. The chain crosses the membrane as a helical span at residues 149–169 (LYVSLAFKLLVLLISSWALFL). Residues 170 to 178 (RPSRSTLPR) lie on the Cytoplasmic side of the membrane. Residues 179–199 (FFVFRCLLMALVFLFVASYWL) traverse the membrane as a helical segment. Over 200–215 (FYGVRVLEPRERDYRG) the chain is Extracellular. The chain crosses the membrane as a helical span at residues 216 to 236 (IVGYAVSLVDALLFIQYLALV). Residues 237–526 (LLEVRHLRPA…VMRLQSETSV (290 aa)) lie on the Cytoplasmic side of the membrane. Positions 523–526 (ETSV) match the PDZ-binding motif.

This sequence belongs to the Vang family. As to quaternary structure, interacts with the PDZ domain of dvl2/dsh. In terms of tissue distribution, ubiquitously expressed at the 4-cell stage. In early somitogenesis, becomes more abundant in anterior neural tissue where expression is seen in the neural tube but not in the notochord.

It localises to the cell membrane. Functionally, plays a role in non-canonical Wnt/planar cell polarity (PCP) signaling to regulate convergent extension cell movements during gastrulation. Acts together with scrib and prickle1 and localizes prickle1 and dvl2/dsh to the plasma membrane. Has an overlapping role with kny during both convergent extension and eye development. In the eye, involved in establishing proper alignment of the anterior neural plate and midline cells expressing shha and shhb/twhh. Has indirect effects on a number of other developmental processes including notochord shape formation, neural progenitor cell morphogenesis, segregation of somites and adaxial cell development. Together with prickle1, required for the posterior (caudal) movement of branchiomotor neurons in the hindbrain independently of, and a few hours after, convergent extension. May be required for cell surface localization of fzd3 and fzd6 in the inner ear. In Danio rerio (Zebrafish), this protein is Vang-like protein 2.